The chain runs to 342 residues: Ferredoxin--NADP reductase (342 aa).

FAD-binding residues include Cys-17, Asp-36, Gln-44, Tyr-49, Ile-89, Phe-124, Asp-289, and Thr-330.

The protein belongs to the ferredoxin--NADP reductase type 2 family. Homodimer. FAD is required as a cofactor.

It catalyses the reaction 2 reduced [2Fe-2S]-[ferredoxin] + NADP(+) + H(+) = 2 oxidized [2Fe-2S]-[ferredoxin] + NADPH. This chain is Ferredoxin--NADP reductase, found in Rhodopseudomonas palustris (strain BisA53).